A 305-amino-acid polypeptide reads, in one-letter code: Ribonucleoside-diphosphate reductase small subunit (305 aa).

Residues glutamate 64, glutamate 94, and histidine 97 each contribute to the Fe cation site. Residue tyrosine 101 is part of the active site. Residues 150–170 (ILMFLIVEGIYFISSFYSISL) traverse the membrane as a helical segment. Residues glutamate 157, glutamate 191, and histidine 194 each coordinate Fe cation.

Belongs to the ribonucleoside diphosphate reductase small chain family. As to quaternary structure, heterotetramer composed of a homodimer of the large subunit (R1) and a homodimer of the small subunit (R2). Larger multisubunit protein complex are also active, composed of (R1)n(R2)n. Requires Fe cation as cofactor.

The protein localises to the host membrane. It carries out the reaction a 2'-deoxyribonucleoside 5'-diphosphate + [thioredoxin]-disulfide + H2O = a ribonucleoside 5'-diphosphate + [thioredoxin]-dithiol. In terms of biological role, ribonucleoside-diphosphate reductase holoenzyme provides the precursors necessary for viral DNA synthesis. Allows virus growth in non-dividing cells, as well as reactivation from latency in infected hosts. Catalyzes the biosynthesis of deoxyribonucleotides from the corresponding ribonucleotides. The sequence is that of Ribonucleoside-diphosphate reductase small subunit from Homo sapiens (Human).